Consider the following 37-residue polypeptide: uncharacterized protein (37 aa).

Residues 13–33 (TFLTIIVLLMIVFGIAIVALL) traverse the membrane as a helical segment.

It is found in the host membrane. This is an uncharacterized protein from Acidianus convivator (ABV).